Here is a 931-residue protein sequence, read N- to C-terminus: Glycine dehydrogenase (decarboxylating) (931 aa).

Lys-684 bears the N6-(pyridoxal phosphate)lysine mark.

The protein belongs to the GcvP family. As to quaternary structure, the glycine cleavage system is composed of four proteins: P, T, L and H. Pyridoxal 5'-phosphate is required as a cofactor.

It catalyses the reaction N(6)-[(R)-lipoyl]-L-lysyl-[glycine-cleavage complex H protein] + glycine + H(+) = N(6)-[(R)-S(8)-aminomethyldihydrolipoyl]-L-lysyl-[glycine-cleavage complex H protein] + CO2. Functionally, the glycine cleavage system catalyzes the degradation of glycine. The P protein binds the alpha-amino group of glycine through its pyridoxal phosphate cofactor; CO(2) is released and the remaining methylamine moiety is then transferred to the lipoamide cofactor of the H protein. In Bartonella henselae (strain ATCC 49882 / DSM 28221 / CCUG 30454 / Houston 1) (Rochalimaea henselae), this protein is Glycine dehydrogenase (decarboxylating).